Here is a 628-residue protein sequence, read N- to C-terminus: MKLSWKTLLLWSLPIFVVGFFFWQGFLGPTTTDVGSNIASSRMTYGRFLEYLDMGWVKRVDLYENNHTAIVEAVGPELGNRVQRIRVELPASAPELITKLRKANVDLDAHPPKSTSAVWGLLGNLLFPLILVGGLAFLFRRSNNASGGPGQAMSFGKSKALFQMEAKTGVVFNDVAGVEEAKEEFQEVVTFLKQPESFTAVGAKIPKGVLLVGPPGTGKTLLAKAIAGEAGVPFFSISGSEFVEMFVGVGASRVRDLFKKAKDNAPCIVFIDEIDAVGRQRGTGVGGGNDEREQTLNQLLTEMDGFEGNTGVIVIAATNRADILDSALLRPGRFDRQVSVDVPDFRGRLAILEVHAKNKKMESKVSLETIARRTPGFSGADLANLLNEAAILTARRRKSAMTMSEIDTSIDRVVAGLEGTPLIDSKSKRLIAYHEVGHAIIGSLLEHHDPVQKVTLIPRGQARGLTWFTPSDDQSLISRSQILARIVGALGGRAAEEIIFGDAEVTTGASNDLQQVTSMARQMVTRFGMSKIGPLSLESQGSDPFLGRGMGGGSEYSDEVATNIDKQVREIVSECYKEAKKIVKDNRVVMDRLVDLLIEKETIEGNEFRHIVKEYTAIPEKNYYISQF.

Over 1-7 the chain is Stromal; the sequence is MKLSWKT. Residues 8 to 28 traverse the membrane as a helical segment; sequence LLLWSLPIFVVGFFFWQGFLG. At 29-118 the chain is on the lumenal side; the sequence is PTTTDVGSNI…AHPPKSTSAV (90 aa). Residues 119 to 139 form a helical membrane-spanning segment; it reads WGLLGNLLFPLILVGGLAFLF. Topologically, residues 140–628 are stromal; sequence RRSNNASGGP…PEKNYYISQF (489 aa). ATP is bound at residue 213-220; sequence GPPGTGKT. Histidine 434 is a Zn(2+) binding site. Residue glutamate 435 is part of the active site. Residues histidine 438 and aspartate 512 each contribute to the Zn(2+) site.

In the central section; belongs to the AAA ATPase family. This sequence in the C-terminal section; belongs to the peptidase M41 family. In terms of assembly, homohexamer. Zn(2+) is required as a cofactor.

It localises to the plastid. It is found in the chloroplast thylakoid membrane. Functionally, acts as a processive, ATP-dependent zinc metallopeptidase. The polypeptide is ATP-dependent zinc metalloprotease FtsH (Porphyra purpurea (Red seaweed)).